Consider the following 673-residue polypeptide: Gametogenetin (673 aa).

Positions 1–599 (MGNVQSEPSA…TSTAGASNKG (599 aa)) are disordered. The span at 14–30 (SRKEQASDRASDSRRTP) shows a compositional bias: basic and acidic residues. Positions 70–83 (ASSSPLPLTLELPS) are enriched in low complexity. The tract at residues 125–506 (RGLLEASHRG…APTPPSTLSP (382 aa)) is interaction with GGNBP1. Positions 161–178 (PAPPPTPLEPRKQLPPAP) are enriched in pro residues. Over residues 192–202 (LASSATSPTES) the composition is skewed to polar residues. The span at 257 to 268 (SASGPLAAKASP) shows a compositional bias: low complexity. Serine 399 is modified (phosphoserine). A compositionally biased stretch (low complexity) spans 413 to 424 (PRRPTPALLAPP). The segment covering 438-475 (RPVPPSPQQIPPLPPPPPTPPATPPPAPPPTPQPPALP) has biased composition (pro residues). Over residues 504-531 (LSPTAAADQVPAATPATVTSQVPATATA) the composition is skewed to low complexity. The interactions with ZNF403/GGNBP2 and OAZ3 stretch occupies residues 511-673 (DQVPAATPAT…HYDLQATHST (163 aa)). The span at 542-551 (TRTRRNKGPR) shows a compositional bias: basic residues.

As to quaternary structure, isoform 1 and isoform 3 interact with FANCL. Isoform 1 interacts with GGNBP1, ZNF403/GGNBP2 and OAZ3. Isoform 2 interacts with GGNBP1. Testis-specific. Specifically expressed in the germ cells and not in the somatic, Sertoli, or Leydig cells. In adult testis, expression starts in stage VIII pachytene spermatocytes, increases in stage IX and X pachytene spermatocytes, and culminates in stage XI diplotene spermatocytes and the meiotic cells in stage XII. Expression decreases slightly in step 1-3 spermatids, further decreases in step 4-11 spermatids, and is no longer detectable in step 12 spermatids and beyond. Isoform 2 is mainly expressed in testis.

Its subcellular location is the cytoplasm. The protein localises to the perinuclear region. It localises to the cytoplasmic vesicle. The protein resides in the nucleus. It is found in the nucleolus. May be involved in spermatogenesis. This Mus musculus (Mouse) protein is Gametogenetin (Ggn).